A 145-amino-acid polypeptide reads, in one-letter code: uncharacterized protein (145 aa).

Ser67 bears the Phosphoserine mark.

In terms of tissue distribution, expressed in retina and retinoblastoma.

This is an uncharacterized protein from Homo sapiens (Human).